Consider the following 5147-residue polypeptide: Cadherin-related tumor suppressor (5147 aa).

The signal sequence occupies residues 1-35; the sequence is MERLLLLFFLLLAGRESLCQTGDTKLELLAPRGRS. Cadherin domains follow at residues 36-156, 157-270, 271-382, 383-494, 495-599, 600-708, 709-820, 821-942, 943-1049, 1050-1153, 1154-1278, 1279-1384, 1385-1489, 1490-1601, 1602-1713, 1714-1823, 1824-1922, 1923-2027, 2028-2167, 2168-2278, 2279-2385, 2386-2491, 2492-2596, 2597-2703, 2704-2810, 2811-2913, 2914-3013, 3014-3124, 3125-3229, 3230-3334, 3335-3439, 3440-3545, 3546-3651, and 3652-3756; these read YATT…SPEF, PEPS…PPIF, DHSD…DPII, SFRF…EPVF, EKSE…APQF, SQRE…DPQF, YPRH…LEML, ECGQ…APVF, ALDR…TPVF, DHTS…APQF, TNST…APEF, LRAP…APEF, TQSS…PPIF, PSTA…APVF, VSMN…VPQF, EQRS…PPQF, LDTP…PPLF, EDTV…APIF, DPMS…VPVF, ISAN…SPVF, DPKQ…PTFL, DSPY…DPVF, ELQS…IPKF, DSTT…FPTF, AYMA…APVM, EQLI…PPKF, TRLF…APEF, EHSF…PPKF, EQAE…TPRF, SVNS…PPVF, NHKE…YPQF, LQPV…PPEF, IKHY…GPTF, and TPEG…NPST. Topologically, residues 36–4583 are extracellular; sequence YATTYEQYAA…GQDAAQVADP (4548 aa). N-linked (GlcNAc...) asparagine glycosylation is found at N239, N257, N276, N280, N402, and N461. Residues N605 and N631 are each glycosylated (N-linked (GlcNAc...) asparagine). N-linked (GlcNAc...) asparagine glycans are attached at residues N1155, N1367, and N1458. N-linked (GlcNAc...) asparagine glycans are attached at residues N1751, N1831, and N1880. N-linked (GlcNAc...) asparagine glycans are attached at residues N2080, N2171, N2247, N2290, N2437, and N2581. A glycan (N-linked (GlcNAc...) asparagine) is linked at N2799. N-linked (GlcNAc...) asparagine glycans are attached at residues N2920, N2946, and N2967. N-linked (GlcNAc...) asparagine glycans are attached at residues N3167, N3303, N3386, N3389, and N3525. N3852, N3865, and N3905 each carry an N-linked (GlcNAc...) asparagine glycan. EGF-like domains lie at 3950–4011, 4013–4049, 4052–4090, and 4092–4128; these read GYEP…EQCS, RQDP…KHCE, RSDV…NQCE, and VSDS…RHCE. Disulfide bonds link C3954–C3966, C3960–C3999, C4001–C4010, C4017–C4028, C4022–C4037, C4039–C4048, C4056–C4067, C4061–C4078, C4080–C4089, C4096–C4107, C4101–C4116, C4118–C4127, C4294–C4320, C4325–C4341, C4334–C4350, and C4352–C4361. Residues 4129–4320 form the Laminin G-like 1 domain; the sequence is RFSYGFQPLS…LQQKGILAGC (192 aa). N-linked (GlcNAc...) asparagine glycosylation is present at N4306. The EGF-like 5 domain maps to 4321 to 4362; sequence NRQACQPALAAERCGGFAGQCIDRWSSSLCQCGGHLQSPDCS. The region spanning 4402 to 4569 is the Laminin G-like 2 domain; it reads DNQQMRERRA…RYHGKIESGC (168 aa). N-linked (GlcNAc...) asparagine glycans are attached at residues N4414, N4471, N4487, N4539, and N4550. A disulfide bridge links C4536 with C4569. The chain crosses the membrane as a helical span at residues 4584–4609; sequence LSIGFTLVIVFFVILVVAILGSYVIY. At 4610 to 5147 the chain is on the cytoplasmic side; the sequence is RFRGKQEKIG…NGPAAPEEYV (538 aa). The interval 4744–4771 is essential for stability of mitochondrial electron chain complexes I and V, and promotes interaction with ND-24; the sequence is PEHYDLENASSIAPSDIDIVYHYKGYRE. 3 disordered regions span residues 4787 to 4850, 4871 to 4921, and 4967 to 5041; these read AYTH…SQQP, TSSS…QTSM, and GDVD…PIPP. A compositionally biased stretch (polar residues) spans 4826–4835; sequence SASRTHQSTP. 2 stretches are compositionally biased toward low complexity: residues 4838–4850 and 4891–4918; these read RLSP…SQQP and SPVM…QAQQ. S4843 bears the Phosphoserine mark. Polar residues predominate over residues 4972–5008; that stretch reads HSSTSTDESGNDSFTCSEIEYDNNSLSGDGKYSTSKS. Residues S5054 and S5061 each carry the phosphoserine modification. Positions 5113 to 5147 are disordered; the sequence is PDTNGPSQQQQQQTQVVSTLRMPSSNGPAAPEEYV. The segment covering 5119 to 5131 has biased composition (low complexity); it reads SQQQQQQTQVVST.

Interacts with Fbxl7. Ft-mito interacts with NADH dehydrogenase subunit ND-24 and with ATP synthase subunit ATPsynC. Phosphorylated by fj on Ser/Thr of cadherin domains. Phosphorylation by fj enhances binding to ds. Phosphorylated in the cytoplasmic domain in a dco-dependent manner which is promoted by ds. In terms of processing, proteolytically cleaved to yield stably associated N- and C-terminal fragments. The C-terminal fragment is processed further to release a 68 kDa mitochondrial fragment, Ft-mito.

It localises to the cell membrane. It is found in the apical cell membrane. The protein resides in the mitochondrion. Its function is as follows. Involved in regulation of planar cell polarity in the compound eye where it is required for correct specification of the R3 and R4 photoreceptor cells by regulating Fz activity in the R3/R4 precursor cells. This is likely to occur through creation of an ft gradient so that the equatorial R3/R4 precursor cell has a higher level of ft function than its polar neighbor. Also required for planar cell polarity of wing hairs. Mediates heterophilic cell adhesion in vitro and is required to stabilize ds on the cell surface. Involved in regulation of eye imaginal disk size. Upstream component of the Hippo pathway where it is likely to act as a cell surface receptor involved in regulation of tissue size and is required for the localization and stability of ex. Probably acts as a cell surface receptor for ds. In terms of biological role, regulates mitochondrial electron transport chain integrity and promotes oxidative phosphorylation. The sequence is that of Cadherin-related tumor suppressor from Drosophila melanogaster (Fruit fly).